The following is a 486-amino-acid chain: Glutamyl-tRNA(Gln) amidotransferase subunit A (486 aa).

Active-site charge relay system residues include K80 and S155. The Acyl-ester intermediate role is filled by S179.

Belongs to the amidase family. GatA subfamily. As to quaternary structure, heterotrimer of A, B and C subunits.

The catalysed reaction is L-glutamyl-tRNA(Gln) + L-glutamine + ATP + H2O = L-glutaminyl-tRNA(Gln) + L-glutamate + ADP + phosphate + H(+). In terms of biological role, allows the formation of correctly charged Gln-tRNA(Gln) through the transamidation of misacylated Glu-tRNA(Gln) in organisms which lack glutaminyl-tRNA synthetase. The reaction takes place in the presence of glutamine and ATP through an activated gamma-phospho-Glu-tRNA(Gln). This is Glutamyl-tRNA(Gln) amidotransferase subunit A from Geobacillus sp. (strain WCH70).